The primary structure comprises 231 residues: Endo-1,4-beta-xylanase 4 (231 aa).

Positions 1 to 18 (MVSFTTILVAATAALVAA) are cleaved as a signal peptide. One can recognise a GH11 domain in the interval 42-230 (GGTPSSTGTH…SSGSSTVTIQ (189 aa)). A glycan (N-linked (GlcNAc...) asparagine) is linked at asparagine 99. The active-site Nucleophile is glutamate 126. The active-site Proton donor is glutamate 217.

Belongs to the glycosyl hydrolase 11 (cellulase G) family.

The protein resides in the secreted. The catalysed reaction is Endohydrolysis of (1-&gt;4)-beta-D-xylosidic linkages in xylans.. It functions in the pathway glycan degradation; xylan degradation. Its function is as follows. Endo-1,4-beta-xylanase involved in the hydrolysis of xylan, a major structural heterogeneous polysaccharide found in plant biomass representing the second most abundant polysaccharide in the biosphere, after cellulose. The protein is Endo-1,4-beta-xylanase 4 (XYL4) of Pyricularia grisea (Crabgrass-specific blast fungus).